A 1363-amino-acid chain; its full sequence is DNA-directed RNA polymerase subunit beta (1363 aa).

The protein belongs to the RNA polymerase beta chain family. The RNAP catalytic core consists of 2 alpha, 1 beta, 1 beta' and 1 omega subunit. When a sigma factor is associated with the core the holoenzyme is formed, which can initiate transcription.

The catalysed reaction is RNA(n) + a ribonucleoside 5'-triphosphate = RNA(n+1) + diphosphate. Functionally, DNA-dependent RNA polymerase catalyzes the transcription of DNA into RNA using the four ribonucleoside triphosphates as substrates. In Syntrophus aciditrophicus (strain SB), this protein is DNA-directed RNA polymerase subunit beta.